The chain runs to 349 residues: Replication-associated protein (349 aa).

The CRESS-DNA virus Rep endonuclease domain maps to 9–117 (QIAAKNYFLT…DGDTIEWGEF (109 aa)). An RCR-1 motif is present at residues 16-19 (FLTY). 3 residues coordinate a divalent metal cation: Glu-50, His-58, and His-60. Positions 58-60 (HLH) match the RCR-2 motif. The active-site For DNA cleavage activity is the Tyr-104. Residues 104–107 (YVDK) carry the RCR-3 motif. Position 108 (Asp-108) interacts with a divalent metal cation. Residues 144-154 (KEEALQIIKEK) form a binding to RBR1 region. The segment at 157–177 (KDFLFCYHNLVSNLDRIFTPA) is oligomerization. 223–230 (GESRTGKT) contacts ATP.

This sequence belongs to the geminiviridae Rep protein family. Homooligomer. Interacts with the replication enhancer protein (REn). Interacts with host retinoblastoma-related protein 1 (RBR1), and may thereby induce the transcription of host replicative enzymes even if the cell is not dividing anymore. Interacts with host PCNA. Interacts with host SCE1 protein. It depends on Mg(2+) as a cofactor. Requires Mn(2+) as cofactor.

Its subcellular location is the host nucleus. Its function is as follows. Essential for the replication of viral ssDNA. The closed circular ssDNA genome is first converted to a superhelical dsDNA. Rep binds a specific region at the genome origin of replication. It introduces an endonucleolytic nick within the conserved sequence 5'-TAATATTAC-3' in the intergenic region of the genome present in all geminiviruses, thereby initiating the rolling circle replication (RCR). Following cleavage, binds covalently to the 5'-phosphate of DNA as a tyrosyl ester. The cleavage gives rise to a free 3'-OH that serves as a primer for the cellular DNA polymerase. The polymerase synthesizes the (+) strand DNA by rolling circle mechanism. After one round of replication, a Rep-catalyzed nucleotidyl transfer reaction releases a circular single-stranded virus genome, thereby terminating the replication. Displays origin-specific DNA cleavage, nucleotidyl transferase, ATPase and helicase activities. The protein is Replication-associated protein of Solanum lycopersicum (Tomato).